The chain runs to 143 residues: Fluoride-specific ion channel FluC 1 (143 aa).

Helical transmembrane passes span 13-33 (VLVGLVFLGGCLGTLIRSVIA), 42-62 (GVPWGTLAINLVGAFVLATLL), 80-100 (LCIGTGLLGGFTTYSALTVEA), and 111-131 (WGIAYLLTSVAAGALLAWVVI). Gly88 and Thr91 together coordinate Na(+).

The protein belongs to the fluoride channel Fluc/FEX (TC 1.A.43) family.

Its subcellular location is the cell membrane. The catalysed reaction is fluoride(in) = fluoride(out). With respect to regulation, na(+) is not transported, but it plays an essential structural role and its presence is essential for fluoride channel function. In terms of biological role, fluoride-specific ion channel. Important for reducing fluoride concentration in the cell, thus reducing its toxicity. The sequence is that of Fluoride-specific ion channel FluC 1 from Cutibacterium acnes (strain DSM 16379 / KPA171202) (Propionibacterium acnes).